We begin with the raw amino-acid sequence, 387 residues long: Galactokinase (387 aa).

33 to 36 (EHTD) is a substrate binding site. ATP-binding positions include Ser-67 and 123-129 (GAGLSSS). Residues Ser-129 and Glu-161 each contribute to the Mg(2+) site. Catalysis depends on Asp-173, which acts as the Proton acceptor. Tyr-223 provides a ligand contact to substrate.

Belongs to the GHMP kinase family. GalK subfamily.

It is found in the cytoplasm. The enzyme catalyses alpha-D-galactose + ATP = alpha-D-galactose 1-phosphate + ADP + H(+). Its pathway is carbohydrate metabolism; galactose metabolism. Catalyzes the transfer of the gamma-phosphate of ATP to D-galactose to form alpha-D-galactose-1-phosphate (Gal-1-P). The protein is Galactokinase of Lacticaseibacillus casei (Lactobacillus casei).